Reading from the N-terminus, the 312-residue chain is Malate dehydrogenase (312 aa).

Residues 7 to 13 (GAAGGIG) and aspartate 34 each bind NAD(+). 2 residues coordinate substrate: arginine 81 and arginine 87. Residues asparagine 94 and 117-119 (ITN) contribute to the NAD(+) site. The substrate site is built by asparagine 119 and arginine 153. Histidine 177 serves as the catalytic Proton acceptor. Methionine 227 serves as a coordination point for NAD(+).

It belongs to the LDH/MDH superfamily. MDH type 1 family. In terms of assembly, homodimer.

It carries out the reaction (S)-malate + NAD(+) = oxaloacetate + NADH + H(+). In terms of biological role, catalyzes the reversible oxidation of malate to oxaloacetate. In Cronobacter sakazakii (strain ATCC BAA-894) (Enterobacter sakazakii), this protein is Malate dehydrogenase.